Here is a 447-residue protein sequence, read N- to C-terminus: Phosphoglucosamine mutase (447 aa).

S103 acts as the Phosphoserine intermediate in catalysis. Mg(2+) is bound by residues S103, D242, D244, and D246. Phosphoserine is present on S103.

The protein belongs to the phosphohexose mutase family. Requires Mg(2+) as cofactor. Activated by phosphorylation.

The enzyme catalyses alpha-D-glucosamine 1-phosphate = D-glucosamine 6-phosphate. Functionally, catalyzes the conversion of glucosamine-6-phosphate to glucosamine-1-phosphate. The sequence is that of Phosphoglucosamine mutase from Jannaschia sp. (strain CCS1).